The primary structure comprises 404 residues: Probable tRNA sulfurtransferase (404 aa).

A THUMP domain is found at 61 to 166 (EAVSERLKDV…SGYSYIMCDE (106 aa)). Residues 184–185 (LL), 209–210 (HF), R266, G288, and Q297 each bind ATP.

The protein belongs to the ThiI family.

It is found in the cytoplasm. It catalyses the reaction [ThiI sulfur-carrier protein]-S-sulfanyl-L-cysteine + a uridine in tRNA + 2 reduced [2Fe-2S]-[ferredoxin] + ATP + H(+) = [ThiI sulfur-carrier protein]-L-cysteine + a 4-thiouridine in tRNA + 2 oxidized [2Fe-2S]-[ferredoxin] + AMP + diphosphate. The catalysed reaction is [ThiS sulfur-carrier protein]-C-terminal Gly-Gly-AMP + S-sulfanyl-L-cysteinyl-[cysteine desulfurase] + AH2 = [ThiS sulfur-carrier protein]-C-terminal-Gly-aminoethanethioate + L-cysteinyl-[cysteine desulfurase] + A + AMP + 2 H(+). It functions in the pathway cofactor biosynthesis; thiamine diphosphate biosynthesis. Functionally, catalyzes the ATP-dependent transfer of a sulfur to tRNA to produce 4-thiouridine in position 8 of tRNAs, which functions as a near-UV photosensor. Also catalyzes the transfer of sulfur to the sulfur carrier protein ThiS, forming ThiS-thiocarboxylate. This is a step in the synthesis of thiazole, in the thiamine biosynthesis pathway. The sulfur is donated as persulfide by IscS. The polypeptide is Probable tRNA sulfurtransferase (Bacillus cereus (strain AH820)).